Consider the following 254-residue polypeptide: Diphthine synthase (254 aa).

S-adenosyl-L-methionine contacts are provided by residues Leu11, Asp86, Ile89, 114 to 115 (SV), Leu166, Leu207, and His232.

It belongs to the diphthine synthase family. As to quaternary structure, homodimer.

It carries out the reaction 2-[(3S)-amino-3-carboxypropyl]-L-histidyl-[translation elongation factor 2] + 3 S-adenosyl-L-methionine = diphthine-[translation elongation factor 2] + 3 S-adenosyl-L-homocysteine + 3 H(+). It functions in the pathway protein modification; peptidyl-diphthamide biosynthesis. Functionally, S-adenosyl-L-methionine-dependent methyltransferase that catalyzes the trimethylation of the amino group of the modified target histidine residue in translation elongation factor 2 (EF-2), to form an intermediate called diphthine. The three successive methylation reactions represent the second step of diphthamide biosynthesis. The polypeptide is Diphthine synthase (Sulfurisphaera tokodaii (strain DSM 16993 / JCM 10545 / NBRC 100140 / 7) (Sulfolobus tokodaii)).